A 135-amino-acid chain; its full sequence is S-protein homolog 20 (135 aa).

The first 26 residues, 1-26 (MNGSSAFHIILSVTFMVFLFGGLCEA), serve as a signal peptide directing secretion. N88 carries N-linked (GlcNAc...) asparagine glycosylation.

The protein belongs to the plant self-incompatibility (S1) protein family.

It is found in the secreted. This Arabidopsis thaliana (Mouse-ear cress) protein is S-protein homolog 20.